Here is a 213-residue protein sequence, read N- to C-terminus: Protein-L-isoaspartate O-methyltransferase (213 aa).

The active site involves Ser62.

This sequence belongs to the methyltransferase superfamily. L-isoaspartyl/D-aspartyl protein methyltransferase family.

The protein localises to the cytoplasm. It carries out the reaction [protein]-L-isoaspartate + S-adenosyl-L-methionine = [protein]-L-isoaspartate alpha-methyl ester + S-adenosyl-L-homocysteine. In terms of biological role, catalyzes the methyl esterification of L-isoaspartyl residues in peptides and proteins that result from spontaneous decomposition of normal L-aspartyl and L-asparaginyl residues. It plays a role in the repair and/or degradation of damaged proteins. The polypeptide is Protein-L-isoaspartate O-methyltransferase (Idiomarina loihiensis (strain ATCC BAA-735 / DSM 15497 / L2-TR)).